The primary structure comprises 443 residues: tRNA modification GTPase MnmE (443 aa).

(6S)-5-formyl-5,6,7,8-tetrahydrofolate is bound by residues R23, E82, and K121. One can recognise a TrmE-type G domain in the interval 215-364 (GTSIVLAGHP…LKQFIQQWMQ (150 aa)). N225 is a binding site for K(+). Residues 225 to 230 (NAGKSS), 244 to 250 (TDIPGTT), and 269 to 272 (DSAG) each bind GTP. Mg(2+) is bound at residue S229. K(+) contacts are provided by T244, I246, and T249. Residue T250 participates in Mg(2+) binding. K443 is a (6S)-5-formyl-5,6,7,8-tetrahydrofolate binding site.

It belongs to the TRAFAC class TrmE-Era-EngA-EngB-Septin-like GTPase superfamily. TrmE GTPase family. Homodimer. Heterotetramer of two MnmE and two MnmG subunits. It depends on K(+) as a cofactor.

Its subcellular location is the cytoplasm. Its function is as follows. Exhibits a very high intrinsic GTPase hydrolysis rate. Involved in the addition of a carboxymethylaminomethyl (cmnm) group at the wobble position (U34) of certain tRNAs, forming tRNA-cmnm(5)s(2)U34. This is tRNA modification GTPase MnmE from Chlamydia abortus (strain DSM 27085 / S26/3) (Chlamydophila abortus).